Consider the following 372-residue polypeptide: M protein, serotype 2.2 (372 aa).

A signal peptide spans 1-41 (MARQQTKKNYSLRKLKTGTASVAVALTVLGAGFANQTEVRA). C repeat units lie at residues 124–158 (AKTT…EAKH), 166–200 (KKLT…EAKY), and 215–249 (QKLE…TSEL). Basic and acidic residues-rich tracts occupy residues 125 to 169 (KTTK…KKLT), 226 to 246 (TSRK…KKVT), and 260 to 274 (EESK…AELQ). Disordered regions lie at residues 125 to 191 (KTTK…ASRA) and 211 to 274 (EAKH…AELQ). 4 D repeats span residues 275–280 (AKLDAQ), 281–286 (GKALKE), 289–294 (AKQTEE), and 296–301 (AKLRAE). Over residues 295-304 (LAKLRAEKAA) the composition is skewed to basic and acidic residues. The interval 295-344 (LAKLRAEKAAGSKTPATKPANKERSGRAAQTATRPSQNKGMRSQLPSTGE) is disordered. The span at 322–341 (AAQTATRPSQNKGMRSQLPS) shows a compositional bias: polar residues. The short motif at 339–343 (LPSTG) is the LPXTG sorting signal element. The residue at position 342 (Thr-342) is a Pentaglycyl murein peptidoglycan amidated threonine. Residues 343–372 (GEAANPFFTAAAATVMVSAGMLALKRKEEN) constitute a propeptide, removed by sortase.

It belongs to the M protein family.

Its subcellular location is the secreted. The protein localises to the cell wall. Functionally, this protein is one of the different antigenic serotypes of protein M. Protein M is closely associated with virulence of the bacterium and can render the organism resistant to phagocytosis. This Streptococcus pyogenes protein is M protein, serotype 2.2 (emmL2.2).